Reading from the N-terminus, the 62-residue chain is UPF0337 protein mll8179 (62 aa).

The interval 1–42 (MRNMVNKDQVAGLAKQLKGSVKQAAGKATGNRRTQAEGMADK) is disordered.

It belongs to the UPF0337 (CsbD) family.

The sequence is that of UPF0337 protein mll8179 from Mesorhizobium japonicum (strain LMG 29417 / CECT 9101 / MAFF 303099) (Mesorhizobium loti (strain MAFF 303099)).